A 366-amino-acid polypeptide reads, in one-letter code: tRNA/tmRNA (uracil-C(5))-methyltransferase (366 aa).

The S-adenosyl-L-methionine site is built by Gln190, Tyr218, Asn223, Glu239, and Asp299. The active-site Nucleophile is Cys324. The Proton acceptor role is filled by Glu358.

It belongs to the class I-like SAM-binding methyltransferase superfamily. RNA M5U methyltransferase family. TrmA subfamily.

The catalysed reaction is uridine(54) in tRNA + S-adenosyl-L-methionine = 5-methyluridine(54) in tRNA + S-adenosyl-L-homocysteine + H(+). The enzyme catalyses uridine(341) in tmRNA + S-adenosyl-L-methionine = 5-methyluridine(341) in tmRNA + S-adenosyl-L-homocysteine + H(+). In terms of biological role, dual-specificity methyltransferase that catalyzes the formation of 5-methyluridine at position 54 (m5U54) in all tRNAs, and that of position 341 (m5U341) in tmRNA (transfer-mRNA). This Salmonella heidelberg (strain SL476) protein is tRNA/tmRNA (uracil-C(5))-methyltransferase.